We begin with the raw amino-acid sequence, 535 residues long: uncharacterized protein (535 aa).

Residues 17-37 traverse the membrane as a helical segment; the sequence is IVLLCMIGFFCTTFMRIHFAL. Asn44 and Asn61 each carry an N-linked (GlcNAc...) asparagine glycan. A run of 6 helical transmembrane segments spans residues 107–127, 144–164, 167–187, 199–219, 225–245, and 292–312; these read LIFS…MFFI, ILVT…SVFL, IGMG…IGNW, IFTL…AAVC, WPAT…LWFF, and AFLG…LFQI. N-linked (GlcNAc...) asparagine glycosylation occurs at Asn329. Transmembrane regions (helical) follow at residues 331 to 351, 368 to 388, 395 to 415, 429 to 451, and 463 to 483; these read TFTA…GIGI, VSHG…AFFV, TGLI…SGFY, MSAI…MSMF, and IFIG…LFGS.

It belongs to the major facilitator superfamily. Sodium/anion cotransporter family.

It is found in the membrane. This is an uncharacterized protein from Caenorhabditis elegans.